The sequence spans 337 residues: Protein FAM169B (337 aa).

The tract at residues 278-326 (STVHPKCSEEDTDTPGQASQEDGPTQFNHGESHKEWAVGEPERTQNGRR) is disordered. Polar residues predominate over residues 291–306 (TPGQASQEDGPTQFNH). Basic and acidic residues predominate over residues 307-322 (GESHKEWAVGEPERTQ).

The protein belongs to the FAM169 family.

The polypeptide is Protein FAM169B (Fam169b) (Mus musculus (Mouse)).